A 505-amino-acid chain; its full sequence is Argininosuccinate lyase (505 aa).

It belongs to the lyase 1 family. Argininosuccinate lyase subfamily.

It is found in the cytoplasm. The enzyme catalyses 2-(N(omega)-L-arginino)succinate = fumarate + L-arginine. Its pathway is amino-acid biosynthesis; L-arginine biosynthesis; L-arginine from L-ornithine and carbamoyl phosphate: step 3/3. This is Argininosuccinate lyase from Rhodococcoides fascians (Rhodococcus fascians).